We begin with the raw amino-acid sequence, 745 residues long: Meiotic driver SPOK3 (745 aa).

Residues K4–E34 adopt a coiled-coil conformation. Disordered regions lie at residues E173–G222 and L407–Q487. Basic and acidic residues predominate over residues T188–Q197. 2 stretches are compositionally biased toward polar residues: residues K208–Q217 and S409–T422. Residues S214–W325 form a required for antidote activity region. The segment covering A466 to S482 has biased composition (basic and acidic residues). Residues Q491–G745 form a required for poison activity region.

Its subcellular location is the cytoplasm. The protein resides in the nucleus. Functionally, promotes unequal transmission of alleles from the parental zygote to progeny spores by acting as poison/antidote system, leading to poisoning of progeny that do not inherit the allele. May possess DNA nuclease activity that leads to spore killing, and a kinase activity that confers resistance to the nuclease activity. This Podospora anserina (Pleurage anserina) protein is Meiotic driver SPOK3.